Reading from the N-terminus, the 442-residue chain is Meiosis-specific with OB domain-containing protein (442 aa).

The OB DNA-binding region spans 167 to 272 (IINVLAAVKS…EANILLNFIR (106 aa)).

This sequence belongs to the MEIOB family. Component of a multiprotein complex with RPA2 and SPATA22. Interacts with SPATA22. Interacts with the complex BRME1:HSF2BP:BRCA2. As to expression, in fetal gonads, specifically expressed in the ovary starting at the 14th weeks post fertilization. In the adult, restricted to testis.

It localises to the cytoplasm. Its subcellular location is the nucleus. It is found in the chromosome. Its function is as follows. Single-stranded DNA-binding protein required for homologous recombination in meiosis I. Required for double strand breaks (DSBs) repair and crossover formation and promotion of faithful and complete synapsis. Not required for the initial loading of recombinases but required to maintain a proper number of RAD51 and DMC1 foci after the zygotene stage. May act by ensuring the stabilization of recombinases, which is required for successful homology search and meiotic recombination. Displays Single-stranded DNA 3'-5' exonuclease activity in vitro. The protein is Meiosis-specific with OB domain-containing protein of Homo sapiens (Human).